Consider the following 327-residue polypeptide: Thioredoxin reductase sirT (327 aa).

FAD contacts are provided by residues 15–18 (AGPA), 37–42 (DTGVFR), H50, and A115. C139 and C142 are disulfide-bonded. FAD is bound by residues D289 and 296–297 (QV).

Belongs to the class-II pyridine nucleotide-disulfide oxidoreductase family. As to quaternary structure, homodimer. FAD is required as a cofactor.

It participates in mycotoxin biosynthesis. In terms of biological role, thioredoxin reductase; part of the gene cluster that mediates the biosynthesis of sirodesmin PL, an epipolythiodioxopiperazine (ETP) characterized by a disulfide bridged cyclic dipeptide and that acts as a phytotoxin which is involved in the blackleg didease of canola. SirD catalyzes the O-prenylation of L-tyrosine (L-Tyr) in the presence of dimethylallyl diphosphate (DMAPP) to yield 4-O-dimethylallyl-L-Tyr, and therefore represents probably the first pathway-specific enzyme in the biosynthesis of sirodesmin PL. 4-O-dimethylallyl-L-Tyr, then undergoes condensation with L-Ser in a reaction catalyzed by the non-ribosomal peptide synthase sirP to form the diketopiperazine (DKP) backbone. Further bishydroxylation of the DKP performed by the cytochrome P450 monooxygenase sirC leads to the production of the intermediate phomamide. This step is essential to form the reactive thiol group required for toxicity of sirodesmin PL. The next steps of sirodesmin biosynthesis are not well understood yet, but some predictions could be made from intermediate compounds identification. Phomamide is converted into phomalizarine via oxidation, probably by sirT. Further oxidation, methylation (by sirM or sirN) and reduction steps convert phomalizarine to deacetyl sirodesmin. Finally, acetyltransferase sirH probably acetylates deacetyl sirodesmin to produce sirodesmin PL. This is Thioredoxin reductase sirT from Leptosphaeria maculans (Blackleg fungus).